Reading from the N-terminus, the 139-residue chain is uncharacterized protein (139 aa).

This sequence to S.typhimurium FliF.

In terms of biological role, may be involved in the assembly, structure, or function of the flagellum. May polymerize to form a filamentous structure that is part of the flagellum. This is an uncharacterized protein from Bacillus subtilis (strain 168).